The following is a 215-amino-acid chain: Probable GTP-binding protein EngB (215 aa).

An EngB-type G domain is found at 30-204 (EGLEVAFAGR…QMVLAQWLGL (175 aa)). GTP-binding positions include 38 to 45 (GRSNAGKS), 64 to 68 (GRTQL), 82 to 85 (DLPG), 149 to 152 (TKAD), and 182 to 185 (LFSA). Mg(2+) contacts are provided by S45 and T66.

The protein belongs to the TRAFAC class TrmE-Era-EngA-EngB-Septin-like GTPase superfamily. EngB GTPase family. Mg(2+) is required as a cofactor.

Functionally, necessary for normal cell division and for the maintenance of normal septation. The polypeptide is Probable GTP-binding protein EngB (Pseudomonas paraeruginosa (strain DSM 24068 / PA7) (Pseudomonas aeruginosa (strain PA7))).